The following is a 107-amino-acid chain: MMKVLVVVALLVTLISYSSSEGIDDLEADELLSLMANEQTRKECIPKHHECTSNKHGCCRGNFFKYKCQCTTVVTQDGEQTERCFCGTPPHRKAAELVVGFGKKIFG.

An N-terminal signal peptide occupies residues 1 to 20; that stretch reads MMKVLVVVALLVTLISYSSS. The propeptide occupies 21–41; it reads EGIDDLEADELLSLMANEQTR. Intrachain disulfides connect C44–C59, C51–C68, C58–C86, and C70–C84.

It belongs to the neurotoxin 19 (CSTX) family. 04 (U1-Lctx) subfamily. Expressed by the venom gland.

Its subcellular location is the secreted. The polypeptide is U1-lycotoxin-Ls1p (Lycosa singoriensis (Wolf spider)).